The chain runs to 357 residues: S-adenosylmethionine decarboxylase proenzyme (357 aa).

Catalysis depends on residues E11 and E14. Residue S71 is the Schiff-base intermediate with substrate; via pyruvic acid of the active site. S71 bears the Pyruvic acid (Ser); by autocatalysis mark. C85 serves as the catalytic Proton donor; for catalytic activity. Catalysis depends on proton acceptor; for processing activity residues S234 and H247.

It belongs to the eukaryotic AdoMetDC family. Pyruvate is required as a cofactor. Is synthesized initially as an inactive proenzyme. Formation of the active enzyme involves a self-maturation process in which the active site pyruvoyl group is generated from an internal serine residue via an autocatalytic post-translational modification. Two non-identical subunits are generated from the proenzyme in this reaction, and the pyruvate is formed at the N-terminus of the alpha chain, which is derived from the carboxyl end of the proenzyme. The post-translation cleavage follows an unusual pathway, termed non-hydrolytic serinolysis, in which the side chain hydroxyl group of the serine supplies its oxygen atom to form the C-terminus of the beta chain, while the remainder of the serine residue undergoes an oxidative deamination to produce ammonia and the pyruvoyl group blocking the N-terminus of the alpha chain.

It catalyses the reaction S-adenosyl-L-methionine + H(+) = S-adenosyl 3-(methylsulfanyl)propylamine + CO2. It participates in amine and polyamine biosynthesis; S-adenosylmethioninamine biosynthesis; S-adenosylmethioninamine from S-adenosyl-L-methionine: step 1/1. This chain is S-adenosylmethionine decarboxylase proenzyme (SAMDC), found in Catharanthus roseus (Madagascar periwinkle).